A 583-amino-acid polypeptide reads, in one-letter code: MEVAANCSLRVKRPLLDPRFEGYKLSLEPLPCYQLELDAAVAEVKLRDDQYTLEHMHAFGMYNYLHCDSWYQDSVYYIDTLGRIMNLTVMLDTALGKPREVFRLPTDLTACDNRLCASIHFSSSTWVTLSDGTGRLYVIGTGERGNSASEKWEIMFNEELGDPFIIIHSISLLNAEEHSIATLLLRIEKEELDMKGSGFYVSLEWVTISKKNQDNKKYEIIKRDILRGKSVPHYAAIEPDGNGLMIVSYKSLTFVQAGQDLEENMDEDISEKIKEPLYYWQQTEDDLTVTIRLPEDSTKEDIQIQFLPDHINIVLKDHQFLEGKLYSSIDHESSTWIIKESNSLEISLIKKNEGLTWPELVIGDKQGELIRDSAQCAAIAERLMHLTSEELNPNPDKEKPPCNAQELEECDIFFEESSSLCRFDGNTLKTTHVVNLGSNQYLFSVIVDPKEMPCFCLRHDVDALLWQPHSSKQDDMWEHIATFNALGYVQASKRDKKFFACAPNYSYAALCECLRRVFIYRQPAPMSTVLYNRKEGRQVGQVAKQQVASLETNDPILGFQATNERLFVLTTKNLFLIKVNTEN.

Ser8 carries the post-translational modification Phosphoserine. In terms of domain architecture, CS spans 273–361 (IKEPLYYWQQ…NEGLTWPELV (89 aa)). At Ser388 the chain carries Phosphoserine.

Isoform 1 is specifically expressed in leukemias and a variety of solid tumor cell lines and is also detected in testis and heart. Isoform 2 is predominantly expressed in testis and weakly expressed in tumor cells.

It localises to the cytoplasm. The protein resides in the nucleus. This is NudC domain-containing protein 1 from Homo sapiens (Human).